Consider the following 451-residue polypeptide: Phosphoglucosamine mutase (451 aa).

The active-site Phosphoserine intermediate is the Ser-102. Mg(2+) is bound by residues Ser-102, Asp-242, Asp-244, and Asp-246. At Ser-102 the chain carries Phosphoserine.

Belongs to the phosphohexose mutase family. Mg(2+) is required as a cofactor. Activated by phosphorylation.

It carries out the reaction alpha-D-glucosamine 1-phosphate = D-glucosamine 6-phosphate. Its function is as follows. Catalyzes the conversion of glucosamine-6-phosphate to glucosamine-1-phosphate. In Staphylococcus carnosus (strain TM300), this protein is Phosphoglucosamine mutase.